The primary structure comprises 197 residues: dCTP deaminase, dUMP-forming (197 aa).

DCTP is bound by residues 105–110 (RSSIGR), aspartate 123, 131–133 (TLE), glutamine 152, tyrosine 166, lysine 174, and glutamine 178. Glutamate 133 acts as the Proton donor/acceptor in catalysis. The interval 161-183 (PAERPYGHPSRDSKYIGQTRPQT) is disordered. Over residues 165-174 (PYGHPSRDSK) the composition is skewed to basic and acidic residues.

This sequence belongs to the dCTP deaminase family. As to quaternary structure, homotrimer.

The catalysed reaction is dCTP + 2 H2O = dUMP + NH4(+) + diphosphate. It participates in pyrimidine metabolism; dUMP biosynthesis; dUMP from dCTP: step 1/1. Bifunctional enzyme that catalyzes both the deamination of dCTP to dUTP and the hydrolysis of dUTP to dUMP without releasing the toxic dUTP intermediate. In Methanothermobacter thermautotrophicus (strain ATCC 29096 / DSM 1053 / JCM 10044 / NBRC 100330 / Delta H) (Methanobacterium thermoautotrophicum), this protein is dCTP deaminase, dUMP-forming.